We begin with the raw amino-acid sequence, 195 residues long: Probable GTP-binding protein EngB (195 aa).

The EngB-type G domain maps to 24–195 (GLSEVALSGR…QIWDLIANYL (172 aa)). GTP is bound by residues 32 to 39 (GRSNVGKS), 59 to 63 (GKTQT), 77 to 80 (DVPG), 144 to 147 (TKED), and 176 to 178 (YSS). 2 residues coordinate Mg(2+): Ser39 and Thr61.

This sequence belongs to the TRAFAC class TrmE-Era-EngA-EngB-Septin-like GTPase superfamily. EngB GTPase family. Requires Mg(2+) as cofactor.

Necessary for normal cell division and for the maintenance of normal septation. This Staphylococcus haemolyticus (strain JCSC1435) protein is Probable GTP-binding protein EngB.